The following is an 812-amino-acid chain: MDAELLELQRQLEAAQSARSSVRLSERNVVELVQKLQERGIIDFELLHTTSGKEYITSDHLKHEIKMEIKKRGRASLVDLSDILGVDLYHVERQSQKVVADDPSLMLINGEIMSQSYWDTVTEEINEKLQERSQIALAEIAAQLHIGSELVVNILEPRLGTIVKGRLEGGQLYTPAYVSRITAMVRGAARGITVPTNLPSVWNSLQLQLQEMHGASGVSVEGSFFQSIFNGLLKEGVVLGSVRAGVQWTPAVFAHAQKESVDAFFSQNSYIGYEVLQKLAIPQPKQYLEARYPDGIALEAVFVHPSVVDMLDAAVGDTIENGQWIDALSVLPSYITGPDATKILSLCPSLQKAIKSSKAVVFGESCVFSNAFIKGIFDRLEKEMDSFGIKHSAGQGKPSNMSSEHRIGSDGKDLGDNDTSSIGASSDKGPKKKRGKVSGSAKGAAVEKDDDNEESIPVKGKKAHRKNKDAGSSGDAKHGGKKASEKTKEDNTNIFPDDLIEQKVLTVAPELEELGGSDDLNGPLKLLSSHLRPMLMDAWMKKRNTMLSENAERRRRLLDNLQKQLDEAVLDMQLYEKSLDVFEDDPATSAILHKHLLRTMGAPVVDKILLTLHKDNKLKNGMDVEDSEENVQLSTADRTSLAKDLPGSLSVKAQALAETLEGKRFDSFMDALRDTAEESGLLFKKLDKRLERSMLHSYRKDLTAQVSSENDPISFLPKVVALLFLQAYNKALQAPGRAVGAVIALLKDKIPAPTYKVLADYHSTTVKVLALQAAATEDGEDCATDRMLERKEDLEERLMPELKSLVLGTSKE.

The disordered stretch occupies residues 389 to 495; the sequence is IKHSAGQGKP…KTKEDNTNIF (107 aa). Composition is skewed to basic and acidic residues over residues 403–415 and 475–491; these read SEHRIGSDGKDLG and DAKHGGKKASEKTKEDN.

The protein belongs to the UFL1 family.

Its function is as follows. E3 UFM1-protein ligase that mediates ufmylation of target proteins. The protein is E3 UFM1-protein ligase 1 homolog of Oryza sativa subsp. indica (Rice).